Consider the following 233-residue polypeptide: MPSSAHLQDAPPLLSRTLTQDEEQTSLRQSSSCGLSAASASESLSGSTKSRIPHSKMLQGNLPRIISPESPAKLPCCYGVIMVLSVAVVALSVALSVKKTPQILTVKTYAACPRNWIGVGNKCYYFNETPSNWTFSQTLCKAQEAELARFDTEEELNFLKRHKGSSGYWIGLHRESSSQPWKWTDNTAYNNLVPIGGDEKHGFLSDNGFSSGRGYIVRKSICSKPNSYTSQCQ.

Positions 1–34 (MPSSAHLQDAPPLLSRTLTQDEEQTSLRQSSSCG) are disordered. Residues 1–76 (MPSSAHLQDA…SPESPAKLPC (76 aa)) are Cytoplasmic-facing. Residues 77-97 (CYGVIMVLSVAVVALSVALSV) traverse the membrane as a helical; Signal-anchor for type II membrane protein segment. Residues 98 to 233 (KKTPQILTVK…KPNSYTSQCQ (136 aa)) are Extracellular-facing. Residues 119 to 228 (VGNKCYYFNE…KSICSKPNSY (110 aa)) enclose the C-type lectin domain. A glycan (N-linked (GlcNAc...) asparagine) is linked at asparagine 132.

It localises to the cell membrane. In terms of biological role, lectin-type cell surface receptor. This chain is C-type lectin domain family 2 member D2 (Clec2d2), found in Rattus norvegicus (Rat).